Here is a 330-residue protein sequence, read N- to C-terminus: MNNMIELRARNAILGAMVGDSLGSTFEFTKQKQAANKLAQYNYLSDGLIGKGPFGLKPGQFTDDTEIALAIMSVIHEYGYYDQYRVAEKYHEWYNSNPFDIGNTTKNSLSQNSCSDMIKASRKYNFGSMSNGSLMRLFGLVPMFYDRVPSSRTTKFIMKAIQQDIILTHSNPEMGPIAIIYGLMLWHAIQGHNASNVYKYGKLLAEKYHSDLYLSIYLSVDSEYDFFDYNDTRYHLNQIDSSNFGFVGFSIWLMLRSLKKHSDYRNAIIEIVSHGGDTDTNACITGALFGALYYNTIPSVWIDSVLNCQATERYQNYPIANPKIWSQWLP.

The protein belongs to the ADP-ribosylglycohydrolase family.

The polypeptide is Putative ADP-ribosyl glycohydrolase L543 (Acanthamoeba polyphaga mimivirus (APMV)).